Consider the following 338-residue polypeptide: Anthranilate phosphoribosyltransferase (338 aa).

5-phospho-alpha-D-ribose 1-diphosphate is bound by residues G78, 81 to 82, T86, 88 to 91, 106 to 114, and S118; these read GD, NIST, and KHGNRSVSS. Residue G78 participates in anthranilate binding. S90 contacts Mg(2+). N109 contacts anthranilate. R164 lines the anthranilate pocket. The Mg(2+) site is built by D223 and E224.

The protein belongs to the anthranilate phosphoribosyltransferase family. Homodimer. Mg(2+) serves as cofactor.

The enzyme catalyses N-(5-phospho-beta-D-ribosyl)anthranilate + diphosphate = 5-phospho-alpha-D-ribose 1-diphosphate + anthranilate. The protein operates within amino-acid biosynthesis; L-tryptophan biosynthesis; L-tryptophan from chorismate: step 2/5. Its function is as follows. Catalyzes the transfer of the phosphoribosyl group of 5-phosphorylribose-1-pyrophosphate (PRPP) to anthranilate to yield N-(5'-phosphoribosyl)-anthranilate (PRA). In Bacillus licheniformis (strain ATCC 14580 / DSM 13 / JCM 2505 / CCUG 7422 / NBRC 12200 / NCIMB 9375 / NCTC 10341 / NRRL NRS-1264 / Gibson 46), this protein is Anthranilate phosphoribosyltransferase.